A 491-amino-acid chain; its full sequence is Conidiogenone synthase PchP450 (491 aa).

The chain crosses the membrane as a helical span at residues 2–22; the sequence is LLLWFGFFSFVCGLVIYRLQF. Cysteine 430 contacts heme.

This sequence belongs to the cytochrome P450 family. Heme serves as cofactor.

Its subcellular location is the membrane. Its pathway is secondary metabolite biosynthesis; terpenoid biosynthesis. Cytochrome P450 monooxygenase; part of the gene cluster that mediates the biosynthesis of conidiogenone, a diterpene known to induce the conidiation. The bifunctional terpene synthase PrDS converts isopentenyl diphosphate (IPP) and dimethylallyl diphosphate (DMAPP) into deoxyconidiogenol. The C-terminal prenyltransferase (PT) domain of PrDS catalyzes formation of GGPP, whereas the N-terminal terpene cyclase (TC) domain catalyzes the cyclization of GGPP into deoxyconidiogenol. The cytochrome P450 monooxygenase PrP450 then catalyzes two rounds of oxidation to furnish conidiogenone. The protein is Conidiogenone synthase PchP450 of Penicillium rubens (strain ATCC 28089 / DSM 1075 / NRRL 1951 / Wisconsin 54-1255) (Penicillium chrysogenum).